Consider the following 107-residue polypeptide: Nucleoid-associated protein MCA1327 (107 aa).

This sequence belongs to the YbaB/EbfC family. As to quaternary structure, homodimer.

It is found in the cytoplasm. It localises to the nucleoid. Its function is as follows. Binds to DNA and alters its conformation. May be involved in regulation of gene expression, nucleoid organization and DNA protection. This Methylococcus capsulatus (strain ATCC 33009 / NCIMB 11132 / Bath) protein is Nucleoid-associated protein MCA1327.